A 426-amino-acid polypeptide reads, in one-letter code: MSKSENLYSAARELIPGGVNSPVRAFTGVGGTPLFIEKADGAYLYDVDGKAYIDYVGSWGPMVLGHNHPAIRNAVIEAAERGLSFGAPTEMEVKMAQLVTELVPTMDMVRMVNSGTEATMSAIRLARGFTGRDKIIKFEGCYHGHADCLLVKAGSGALTLGQPNSPGVPADFAKHTLTCTYNDLASVRAAFEQYPQEIACIIVEPVAGNMNCVPPLPEFLPGLRALCDEFGALLIIDEVMTGFRVALAGAQDYYGVEPDLTCLGKIIGGGMPVGAFGGRRDVMDALAPTGPVYQAGTLSGNPIAMAAGFACLNEVAQPGVHETLDELTSRLAEGLLEAAEEAGIPLVVNHVGGMFGIFFTDAESVTCYQDVMACDVERFKRFFHMMLDEGVYLAPSAFEAGFMSVAHSMEDINNTIDAARRVFAKL.

Lys-265 is subject to N6-(pyridoxal phosphate)lysine.

It belongs to the class-III pyridoxal-phosphate-dependent aminotransferase family. HemL subfamily. As to quaternary structure, homodimer. It depends on pyridoxal 5'-phosphate as a cofactor.

It localises to the cytoplasm. The enzyme catalyses (S)-4-amino-5-oxopentanoate = 5-aminolevulinate. It functions in the pathway porphyrin-containing compound metabolism; protoporphyrin-IX biosynthesis; 5-aminolevulinate from L-glutamyl-tRNA(Glu): step 2/2. The sequence is that of Glutamate-1-semialdehyde 2,1-aminomutase from Escherichia coli O139:H28 (strain E24377A / ETEC).